The sequence spans 600 residues: Proline--tRNA ligase (600 aa).

This sequence belongs to the class-II aminoacyl-tRNA synthetase family. ProS type 1 subfamily. As to quaternary structure, homodimer.

Its subcellular location is the cytoplasm. The enzyme catalyses tRNA(Pro) + L-proline + ATP = L-prolyl-tRNA(Pro) + AMP + diphosphate. Its function is as follows. Catalyzes the attachment of proline to tRNA(Pro) in a two-step reaction: proline is first activated by ATP to form Pro-AMP and then transferred to the acceptor end of tRNA(Pro). As ProRS can inadvertently accommodate and process non-cognate amino acids such as alanine and cysteine, to avoid such errors it has two additional distinct editing activities against alanine. One activity is designated as 'pretransfer' editing and involves the tRNA(Pro)-independent hydrolysis of activated Ala-AMP. The other activity is designated 'posttransfer' editing and involves deacylation of mischarged Ala-tRNA(Pro). The misacylated Cys-tRNA(Pro) is not edited by ProRS. The sequence is that of Proline--tRNA ligase from Synechococcus sp. (strain ATCC 27144 / PCC 6301 / SAUG 1402/1) (Anacystis nidulans).